The primary structure comprises 457 residues: MASTCSGCGPGYKTPLDAMKGPREEIVYLPCIYRNTDIQKPDYLATVDINPQSPNFCKVIHRLPMPNLKDELHHSGWNACSSCFDDPSKRRNRLILPSLISSRIYVVDVGTDPRAPRLHKTVEPTDLFWKCGLANPHTSHCLGSGQIMISTMGDPSGNGKGGFVLLDGETFEVIGNWEQPGDAAPFGYDFWYQPRHNVMISTEWGAPKALGNGFNPADVKAGHYGQRLHVWDWTTHKRIQTLDLGEEGAIPLEVRFLHDPAAAEGFVGCALQSTVFRFYKTPKGDWAAEKVIKVPSKKVEGWALPDMPGLITDILISLDDRFLYFSNWLHGDIRQYDITDRKNPRMVGQVFLGGSVLKDGPVKVLEDKELDSQPTPRILKGKRLYVTTSLYSAWDKQFYPDLIKEGSVMMQIDVNTDTGGLKLNENFLVDFGAEPEGPALAHELRYPGGDCTSDIWL.

Belongs to the selenium-binding protein family.

It is found in the nucleus. The protein localises to the cytoplasm. It localises to the cytosol. Its subcellular location is the membrane. The enzyme catalyses methanethiol + O2 + H2O = hydrogen sulfide + formaldehyde + H2O2 + H(+). The protein operates within organosulfur degradation. In terms of biological role, catalyzes the oxidation of methanethiol, an organosulfur compound known to be produced in substantial amounts by gut bacteria. Selenium-binding protein which may be involved in the sensing of reactive xenobiotics in the cytoplasm. May be involved in intra-Golgi protein transport. The protein is Methanethiol oxidase (selenbp1) of Danio rerio (Zebrafish).